Consider the following 834-residue polypeptide: Protein Jade-1 (834 aa).

A disordered region spans residues 1 to 46 (MKRGRLPSSSEDSDDNGSLSTTWSQHSRSQHGRSSTCSRPEDRKPS). Residues 24–35 (SQHSRSQHGRSS) are compositionally biased toward low complexity. The interval 61–81 (DSYQLNPDDYYVLADPWRQEW) is interaction with KAT7/HBO1 and histones. The segment at 81 to 189 (WEKGVQVPVS…EQRCYDNMNH (109 aa)) is interaction with histones. Serine 90 carries the post-translational modification Phosphoserine. The residue at position 93 (threonine 93) is a Phosphothreonine. A Glycyl lysine isopeptide (Lys-Gly) (interchain with G-Cter in SUMO2) cross-link involves residue lysine 115. Residues 204 to 254 (DVVCDVCQSPDGEDGNEMVFCDKCNICVHQACYGILKVPEGSWLCRTCALG) form a PHD-type 1 zinc finger. A C2HC pre-PHD-type zinc finger spans residues 256–290 (QPKCLLCPKKGGAMKPTRSGTKWVHVSCALWIPEV). A PHD-type 2 zinc finger spans residues 314 to 370 (LVCSLCNEKFGASIQCSVKNCRTAFHVTCAFDRGLEMKTILAENDEVKFKSYCPKHS). The tract at residues 367-409 (PKHSSHRKPEEGLGEGAAQENGAPESSPQSPLEPYGSLEPNRE) is disordered. Lysine 573 participates in a covalent cross-link: Glycyl lysine isopeptide (Lys-Gly) (interchain with G-Cter in SUMO2). Disordered regions lie at residues 589 to 621 (HPLK…CGRR) and 676 to 716 (DKSF…GTRK). Residue serine 603 is modified to Phosphoserine. At lysine 609 the chain carries N6-acetyllysine. A phosphoserine mark is found at serine 704 and serine 735. The disordered stretch occupies residues 738–819 (KSWGGFRIPK…EKKCIHASST (82 aa)). 2 stretches are compositionally biased toward basic and acidic residues: residues 747–768 (KKGE…HSDC) and 777–790 (PAKE…RADS).

It belongs to the JADE family. Component of the HBO1 complex composed at least of ING4 or ING5, KAT7/HBO1, MEAF6, and one of JADE1, JADE2 and JADE3. Interacts with NPHP4. In terms of tissue distribution, highly expressed in kidney. Also present in liver (at protein level).

The protein localises to the nucleus. It localises to the chromosome. Its subcellular location is the cytoplasm. It is found in the cytoskeleton. The protein resides in the cilium basal body. Its function is as follows. Scaffold subunit of some HBO1 complexes, which have a histone H4 acetyltransferase activity. Plays a key role in HBO1 complex by directing KAT7/HBO1 specificity towards histone H4 acetylation (H4K5ac, H4K8ac and H4K12ac), regulating DNA replication initiation, regulating DNA replication initiation. May also promote acetylation of nucleosomal histone H4 by KAT5. Promotes apoptosis. May act as a renal tumor suppressor. Negatively regulates canonical Wnt signaling; at least in part, cooperates with NPHP4 in this function. The protein is Protein Jade-1 (Jade1) of Mus musculus (Mouse).